The sequence spans 421 residues: MSQLTEFISCIPVVNEEQNEEDERGLCKIQIEDGAMLETLDENSLSGLRIEKMLVSEGTGIFSKSSFGINDLRIFTGENIDEESKKYVWYELLKMLTGHKVYIASLDEKVVFTKWTCRMQDDEVWKVVMELESSAIIRKIAELTLHPVKKGEIDLFEMADKLYKDICCVNDSYRNIKESDSSNRNRVEQLARERELLDKLLETRDERTRAMMVTLLNEKKKKIRELHEILRQNNIKLSDDDVLDSALINTEVQKPISELNSPGKRMKRRKTVVEPQNLQKKLKDTSRRRANRKISNQSVIKMEDDDFDDFQFFGLSKRPIITAKDKLSEKYDDITSFGDDTQSISFESDSSSDVQKHLVSLEDNGIQISAGRSDEDYGDISGSESETDASAGEKKSSNHSEQSGNDREPCLQTESETDIET.

The interval 1–196 is interaction with NEJ1; it reads MSQLTEFISC…VEQLAREREL (196 aa). The disordered stretch occupies residues 365 to 421; it reads GIQISAGRSDEDYGDISGSESETDASAGEKKSSNHSEQSGNDREPCLQTESETDIET. Residues 391–409 show a composition bias toward basic and acidic residues; it reads AGEKKSSNHSEQSGNDREP.

Belongs to the XRCC4-XLF family. XLF subfamily. In terms of assembly, interacts with DNL4 (via BRCT domain). Interacts (via N-terminus) with NEJ1 (via C-terminus); the interaction is direct. The DNL4-LIF1 complex interacts with POL4.

It is found in the cytoplasm. Its subcellular location is the nucleus. In terms of biological role, involved in non-homologous repair of DNA double-strand breaks. Stabilizes DNL4. The protein is Non-homologous end-joining factor LIF1 (LIF1) of Saccharomyces cerevisiae (strain ATCC 204508 / S288c) (Baker's yeast).